A 130-amino-acid polypeptide reads, in one-letter code: Lipoprotein LpqS (130 aa).

The N-terminal stretch at 1–23 (MVWMRSAIVAVALGVTVAAVAAA) is a signal peptide. Cysteine 24 is lipidated: N-palmitoyl cysteine. Cysteine 24 is lipidated: S-diacylglycerol cysteine.

It localises to the cell membrane. May play an essential role in M.tuberculosis replication and survival inside the host cell. The protein is Lipoprotein LpqS of Mycobacterium tuberculosis (strain ATCC 25618 / H37Rv).